A 452-amino-acid polypeptide reads, in one-letter code: Pup--protein ligase (452 aa).

Glutamate 9 contributes to the Mg(2+) binding site. Arginine 53 is an ATP binding site. Tyrosine 55 provides a ligand contact to Mg(2+). The Proton acceptor role is filled by aspartate 57. Glutamate 63 serves as a coordination point for Mg(2+). Residues threonine 66 and tryptophan 419 each coordinate ATP.

The protein belongs to the Pup ligase/Pup deamidase family. Pup-conjugating enzyme subfamily.

The catalysed reaction is ATP + [prokaryotic ubiquitin-like protein]-L-glutamate + [protein]-L-lysine = ADP + phosphate + N(6)-([prokaryotic ubiquitin-like protein]-gamma-L-glutamyl)-[protein]-L-lysine.. It functions in the pathway protein degradation; proteasomal Pup-dependent pathway. It participates in protein modification; protein pupylation. Catalyzes the covalent attachment of the prokaryotic ubiquitin-like protein modifier Pup to the proteasomal substrate proteins, thereby targeting them for proteasomal degradation. This tagging system is termed pupylation. The ligation reaction involves the side-chain carboxylate of the C-terminal glutamate of Pup and the side-chain amino group of a substrate lysine. This chain is Pup--protein ligase, found in Mycobacterium avium (strain 104).